The following is a 471-amino-acid chain: 4-aminobutyrate aminotransferase (471 aa).

135-136 (GA) provides a ligand contact to pyridoxal 5'-phosphate. Residue R192 coordinates substrate. K326 is modified (N6-(pyridoxal phosphate)lysine). Position 351 (T351) interacts with pyridoxal 5'-phosphate.

Belongs to the class-III pyridoxal-phosphate-dependent aminotransferase family. In terms of assembly, homodimer and homotetramer. Pyridoxal 5'-phosphate serves as cofactor.

The protein localises to the cytoplasm. The catalysed reaction is 4-aminobutanoate + 2-oxoglutarate = succinate semialdehyde + L-glutamate. Required for the degradation of gamma-aminobutyric acid (GABA), which is important for utilization of GABA as nitrogen source and for oxidative stress tolerance. Deaminates GABA to succinate semialdehyde, which in turn is converted to succinate by the succinate-semialdehyde dehydrogenase UGA2. Cannot transaminate beta-alanine (BAL). This is 4-aminobutyrate aminotransferase (UGA1) from Saccharomyces cerevisiae (strain ATCC 204508 / S288c) (Baker's yeast).